Here is a 50-residue protein sequence, read N- to C-terminus: Large ribosomal subunit protein bL32c (50 aa).

Belongs to the bacterial ribosomal protein bL32 family.

The protein localises to the plastid. The polypeptide is Large ribosomal subunit protein bL32c (rpl32) (Euglena longa (Euglenophycean alga)).